Reading from the N-terminus, the 668-residue chain is DNA ligase (668 aa).

Residues 31–35 (DYDFD), 80–81 (SL), and glutamate 111 contribute to the NAD(+) site. Lysine 113 acts as the N6-AMP-lysine intermediate in catalysis. The NAD(+) site is built by arginine 134, glutamate 170, lysine 285, and lysine 309. Zn(2+) contacts are provided by cysteine 403, cysteine 406, cysteine 421, and cysteine 427. A BRCT domain is found at 587–668 (NATEKFIGKT…EFITKLNESE (82 aa)).

The protein belongs to the NAD-dependent DNA ligase family. LigA subfamily. It depends on Mg(2+) as a cofactor. Mn(2+) is required as a cofactor.

It carries out the reaction NAD(+) + (deoxyribonucleotide)n-3'-hydroxyl + 5'-phospho-(deoxyribonucleotide)m = (deoxyribonucleotide)n+m + AMP + beta-nicotinamide D-nucleotide.. Functionally, DNA ligase that catalyzes the formation of phosphodiester linkages between 5'-phosphoryl and 3'-hydroxyl groups in double-stranded DNA using NAD as a coenzyme and as the energy source for the reaction. It is essential for DNA replication and repair of damaged DNA. This is DNA ligase from Flavobacterium johnsoniae (strain ATCC 17061 / DSM 2064 / JCM 8514 / BCRC 14874 / CCUG 350202 / NBRC 14942 / NCIMB 11054 / UW101) (Cytophaga johnsonae).